A 651-amino-acid chain; its full sequence is Cytoplasmic tyrosine-protein kinase BMX (651 aa).

In terms of domain architecture, PH spans 4–111 (KSILEELLLK…WLKALQKEIR (108 aa)). The segment at 113-149 (NPHLLIKYHSGFFVDGKFLCCQQSCKAAPGCTLWEAY) adopts a Btk-type zinc-finger fold. Residues histidine 121, cysteine 132, cysteine 133, and cysteine 143 each coordinate Zn(2+). The 97-residue stretch at 272–368 (WFAGNISRSQ…GMITRLRHPV (97 aa)) folds into the SH2 domain. Positions 393-646 (ITLLKELGNG…QLLSAIEPLR (254 aa)) constitute a Protein kinase domain. ATP is bound by residues 399–407 (LGNGQFGVV) and lysine 421. Aspartate 512 (proton acceptor) is an active-site residue. A Phosphotyrosine; by SRC and autocatalysis modification is found at tyrosine 542.

This sequence belongs to the protein kinase superfamily. Tyr protein kinase family. TEC subfamily. In terms of assembly, interacts with BCAR1, CAV1, MYD88, PTK2/FAK1, RUFY1, RUFY2, STAT3, TIRAP and TNFRSF1B. Zn(2+) is required as a cofactor. Post-translationally, phosphorylated in response to protein I/II and to LPS. Phosphorylation at Tyr-542 by SRC and by autocatalysis leads to activation and is required for STAT3 phosphorylation by BMX. In terms of tissue distribution, specifically expressed in the endocardium of the developing heart as well as in the endocardium of the left ventricle and in the endothelium of large arteries in adult mice.

The protein resides in the cytoplasm. It catalyses the reaction L-tyrosyl-[protein] + ATP = O-phospho-L-tyrosyl-[protein] + ADP + H(+). TEK and vascular endothelial growth factor receptor 1 (FLT1) stimulate BMX tyrosine kinase activity. Activated by integrins through the mediation of PTK2/FAK1. Activated by TNF through the mediation of TNFRSF1B. Functionally, non-receptor tyrosine kinase that plays central but diverse modulatory roles in various signaling processes involved in the regulation of actin reorganization, cell migration, cell proliferation and survival, cell adhesion, and apoptosis. Participates in signal transduction stimulated by growth factor receptors, cytokine receptors, G-protein coupled receptors, antigen receptors and integrins. Induces tyrosine phosphorylation of BCAR1 in response to integrin regulation. Activation of BMX by integrins is mediated by PTK2/FAK1, a key mediator of integrin signaling events leading to the regulation of actin cytoskeleton and cell motility. Plays a critical role in TNF-induced angiogenesis, and implicated in the signaling of TEK and FLT1 receptors, 2 important receptor families essential for angiogenesis. Required for the phosphorylation and activation of STAT3, a transcription factor involved in cell differentiation. Also involved in interleukin-6 (IL6) induced differentiation. Also plays a role in programming adaptive cytoprotection against extracellular stress in different cell systems, salivary epithelial cells, brain endothelial cells, and dermal fibroblasts. May be involved in regulation of endocytosis through its interaction with an endosomal protein RUFY1. May also play a role in the growth and differentiation of hematopoietic cells; as well as in signal transduction in endocardial and arterial endothelial cells. The chain is Cytoplasmic tyrosine-protein kinase BMX (Bmx) from Mus musculus (Mouse).